A 217-amino-acid polypeptide reads, in one-letter code: Imidazole glycerol phosphate synthase subunit HisH (217 aa).

The Glutamine amidotransferase type-1 domain maps to 5–217 (RVGIINYGVG…LRLLANFLTL (213 aa)). Cysteine 93 serves as the catalytic Nucleophile. Active-site residues include histidine 199 and glutamate 201.

Heterodimer of HisH and HisF.

The protein localises to the cytoplasm. It carries out the reaction 5-[(5-phospho-1-deoxy-D-ribulos-1-ylimino)methylamino]-1-(5-phospho-beta-D-ribosyl)imidazole-4-carboxamide + L-glutamine = D-erythro-1-(imidazol-4-yl)glycerol 3-phosphate + 5-amino-1-(5-phospho-beta-D-ribosyl)imidazole-4-carboxamide + L-glutamate + H(+). It catalyses the reaction L-glutamine + H2O = L-glutamate + NH4(+). It functions in the pathway amino-acid biosynthesis; L-histidine biosynthesis; L-histidine from 5-phospho-alpha-D-ribose 1-diphosphate: step 5/9. Functionally, IGPS catalyzes the conversion of PRFAR and glutamine to IGP, AICAR and glutamate. The HisH subunit catalyzes the hydrolysis of glutamine to glutamate and ammonia as part of the synthesis of IGP and AICAR. The resulting ammonia molecule is channeled to the active site of HisF. In Helicobacter hepaticus (strain ATCC 51449 / 3B1), this protein is Imidazole glycerol phosphate synthase subunit HisH.